The primary structure comprises 442 residues: tRNA-2-methylthio-N(6)-dimethylallyladenosine synthase (442 aa).

An MTTase N-terminal domain is found at 2–120 (KKVFIRTFGC…LPKMIVDKET (119 aa)). [4Fe-4S] cluster-binding residues include Cys-11, Cys-49, Cys-83, Cys-157, Cys-161, and Cys-164. One can recognise a Radical SAM core domain in the interval 143 to 375 (RVEGGAAFVS…NEVIEAETAR (233 aa)). In terms of domain architecture, TRAM spans 378–441 (QTMIGTVQRC…TFSLRGKIVE (64 aa)).

It belongs to the methylthiotransferase family. MiaB subfamily. Monomer. [4Fe-4S] cluster serves as cofactor.

The protein localises to the cytoplasm. It carries out the reaction N(6)-dimethylallyladenosine(37) in tRNA + (sulfur carrier)-SH + AH2 + 2 S-adenosyl-L-methionine = 2-methylsulfanyl-N(6)-dimethylallyladenosine(37) in tRNA + (sulfur carrier)-H + 5'-deoxyadenosine + L-methionine + A + S-adenosyl-L-homocysteine + 2 H(+). In terms of biological role, catalyzes the methylthiolation of N6-(dimethylallyl)adenosine (i(6)A), leading to the formation of 2-methylthio-N6-(dimethylallyl)adenosine (ms(2)i(6)A) at position 37 in tRNAs that read codons beginning with uridine. The sequence is that of tRNA-2-methylthio-N(6)-dimethylallyladenosine synthase from Neisseria meningitidis serogroup A / serotype 4A (strain DSM 15465 / Z2491).